Consider the following 299-residue polypeptide: Xyloglucan endotransglucosylase protein 6 (299 aa).

The signal sequence occupies residues 1–25 (MASSLTLPMAMAFTLLALSFASAMG). Residues 26 to 219 (GSMNSSRFDE…WSHAPFVASY (194 aa)) enclose the GH16 domain. E105 functions as the Nucleophile in the catalytic mechanism. E109 (proton donor) is an active-site residue. Position 109 (E109) interacts with xyloglucan. The N-linked (GlcNAc...) asparagine glycan is linked to N113. Residues 122-124 (QTN), 132-134 (NRE), 198-199 (DW), and G203 each bind xyloglucan. 2 disulfide bridges follow: C227/C242 and C281/C294. Xyloglucan is bound at residue R286.

The protein belongs to the glycosyl hydrolase 16 family. XTH group 1 subfamily. Post-translationally, contains at least one intrachain disulfide bond essential for its enzymatic activity. As to expression, highest expression in ripe leaves after full expansion. Also expressed in fruits, and at a lower level in flowers and stems (picked at anthesis).

Its subcellular location is the secreted. It localises to the cell wall. The protein localises to the extracellular space. The protein resides in the apoplast. It catalyses the reaction breaks a beta-(1-&gt;4) bond in the backbone of a xyloglucan and transfers the xyloglucanyl segment on to O-4 of the non-reducing terminal glucose residue of an acceptor, which can be a xyloglucan or an oligosaccharide of xyloglucan.. Functionally, catalyzes xyloglucan endotransglycosylation (XET). Cleaves and religates xyloglucan polymers. Does not catalyze xyloglucan endohydrolysis (XEH). Probably involved in cell wall restructuring during postharvest fruit softening. The sequence is that of Xyloglucan endotransglucosylase protein 6 from Diospyros kaki (Kaki persimmon).